A 98-amino-acid polypeptide reads, in one-letter code: Protein Frey 1 (98 aa).

The chain crosses the membrane as a helical span at residues Ala-13–Arg-29. The tract at residues Tyr-60–Pro-87 is disordered.

Interacts with SPPL2C (via active sites); the interaction stabilizes FREY1 protein and inhibits SPPL2C proteolytic activity. Interacts with IZUMO1; the interaction retains IZUMO1 at the endoplasmic reticulum membrane and coordinates IZUMO1 complex assembly.

Its subcellular location is the endoplasmic reticulum membrane. Functionally, key regulator for male fertility expressed transiently in round spermatids where it recruits IZUMO1 at the endoplasmic reticulum (ER) membrane and coordinates the oolemmal binding multimeric complex (IZUMO1 complex) assembly. Upon complete assembly of the IZUMO1 complex, its ER retention is released, facilitating IZUMO1 complex export to the acrosome. Through the interaction with SPPL2C, inhibits its intramembrane protease activity directly accessing the catalytic center of an I-CLiP. The protein is Protein Frey 1 of Homo sapiens (Human).